Consider the following 181-residue polypeptide: Large ribosomal subunit protein uL6 (181 aa).

It belongs to the universal ribosomal protein uL6 family. In terms of assembly, part of the 50S ribosomal subunit.

Functionally, this protein binds to the 23S rRNA, and is important in its secondary structure. It is located near the subunit interface in the base of the L7/L12 stalk, and near the tRNA binding site of the peptidyltransferase center. The protein is Large ribosomal subunit protein uL6 of Rhodopirellula baltica (strain DSM 10527 / NCIMB 13988 / SH1).